Reading from the N-terminus, the 735-residue chain is Catalase-peroxidase (735 aa).

Positions 1–10 (MMDGAQTNSG) are enriched in polar residues. The segment at 1-20 (MMDGAQTNSGGCPVMHGGGS) is disordered. The segment at residues 100–228 (WHSAGTYRTY…LAAVQMGLIY (129 aa)) is a cross-link (tryptophyl-tyrosyl-methioninium (Trp-Tyr) (with M-254)). His101 acts as the Proton acceptor in catalysis. Residues 228–254 (YVNPQGPDGNPDPLASAFDIRDTFARM) constitute a cross-link (tryptophyl-tyrosyl-methioninium (Tyr-Met) (with W-100)). His269 is a binding site for heme b.

This sequence belongs to the peroxidase family. Peroxidase/catalase subfamily. As to quaternary structure, homodimer or homotetramer. Heme b serves as cofactor. In terms of processing, formation of the three residue Trp-Tyr-Met cross-link is important for the catalase, but not the peroxidase activity of the enzyme.

It catalyses the reaction H2O2 + AH2 = A + 2 H2O. The catalysed reaction is 2 H2O2 = O2 + 2 H2O. Its function is as follows. Bifunctional enzyme with both catalase and broad-spectrum peroxidase activity. This is Catalase-peroxidase from Jannaschia sp. (strain CCS1).